The sequence spans 242 residues: Caffeoyl-CoA O-methyltransferase 3 (242 aa).

Residue Lys-16 participates in substrate binding. Residues Thr-58, Glu-80, 82-83 (GV), Ser-88, Asp-106, and Ala-135 each bind S-adenosyl-L-methionine. Asp-158 is a binding site for substrate. Asp-158 is a binding site for a divalent metal cation. An S-adenosyl-L-methionine-binding site is contributed by Asp-160. A divalent metal cation-binding residues include Asp-184 and Asn-185. Asn-189 lines the substrate pocket.

The protein belongs to the class I-like SAM-binding methyltransferase superfamily. Cation-dependent O-methyltransferase family. CCoAMT subfamily. Mg(2+) is required as a cofactor. As to expression, mostly expressed in the bottom and middle parts of the stems.

The enzyme catalyses (E)-caffeoyl-CoA + S-adenosyl-L-methionine = (E)-feruloyl-CoA + S-adenosyl-L-homocysteine + H(+). Its pathway is aromatic compound metabolism; phenylpropanoid biosynthesis. In terms of biological role, methylates caffeoyl-CoA to feruloyl-CoA and 5-hydroxyferuloyl-CoA to sinapoyl-CoA. Plays a role in the synthesis of feruloylated polysaccharides. Involved in the reinforcement of the plant cell wall. Also involved in the responding to wounding or pathogen challenge by the increased formation of cell wall-bound ferulic acid polymers. Also methylates free caffeic and 5-hydroxyferulic acids. This Nicotiana tabacum (Common tobacco) protein is Caffeoyl-CoA O-methyltransferase 3 (CCOAOMT3).